The primary structure comprises 1612 residues: Phospholipid-transporting ATPase DNF2 (1612 aa).

The tract at residues 1 to 74 is disordered; that stretch reads MSSPSKPTSP…MKDISTPDLS (74 aa). At 1 to 252 the chain is on the cytoplasmic side; that stretch reads MSSPSKPTSP…TFFPKNILFQ (252 aa). Over residues 20 to 30 the composition is skewed to low complexity; it reads GSASNGLSSMS. Threonine 70 carries the phosphothreonine modification. Serine 85 carries the phosphoserine modification. The chain crosses the membrane as a helical span at residues 253–273; sequence FHNFANIYFLILLILGAFQIF. An involved in phosphatidylcholine substrate selection region spans residues 272–279; it reads IFGVTNPG. Residues 274 to 277 are Extracellular-facing; sequence GVTN. The chain crosses the membrane as a helical span at residues 278-298; it reads PGFASVPLIVIVIITAIKDGI. Residues 299–598 lie on the Cytoplasmic side of the membrane; it reads EDSRRTVLDL…RISRELNFSV (300 aa). Basic and acidic residues predominate over residues 364–373; it reads KLQKKREELR. Residues 364 to 384 are disordered; that stretch reads KLQKKREELRRKRNSRSFGPR. 4 positions are modified to phosphoserine: serine 389, serine 392, serine 396, and serine 403. Tyrosine 406 is subject to Phosphotyrosine. The chain crosses the membrane as a helical span at residues 599–619; sequence ILNFVLLFILCFTAGIVNGVY. The Extracellular portion of the chain corresponds to 620-639; the sequence is YKQKPRSRDYFEFGTIGGSA. The involved in phosphatidylcholine substrate selection stretch occupies residues 631–635; that stretch reads EFGTI. The helical transmembrane segment at 640–660 threads the bilayer; it reads STNGFVSFWVAVILYQSLVPI. The Cytoplasmic portion of the chain corresponds to 661–1231; sequence SLYISVEIIK…WCYKRLAEMI (571 aa). The active-site 4-aspartylphosphate intermediate is aspartate 712. ATP contacts are provided by aspartate 712, lysine 713, and threonine 714. Residue aspartate 712 participates in Mg(2+) binding. Threonine 714 is a Mg(2+) binding site. Threonine 782 bears the Phosphothreonine mark. ATP contacts are provided by glutamate 846, phenylalanine 887, serine 889, lysine 892, and lysine 916. Lysine 938 participates in a covalent cross-link: Glycyl lysine isopeptide (Lys-Gly) (interchain with G-Cter in ubiquitin). Positions 952, 953, 1032, 1033, 1034, 1147, and 1153 each coordinate ATP. Aspartate 1173 lines the Mg(2+) pocket. Residues asparagine 1176 and aspartate 1177 each coordinate ATP. Aspartate 1177 contributes to the Mg(2+) binding site. The helical transmembrane segment at 1232-1252 threads the bilayer; it reads PQFFYKNVIFTLSLFWYGIYN. The Extracellular segment spans residues 1253-1262; that stretch reads NFDGSYLFEY. The chain crosses the membrane as a helical span at residues 1263–1283; it reads TYLTFYNLAFTSVPVILLAVL. Over 1284–1313 the chain is Cytoplasmic; it reads DQDVSDTVSMLVPQLYRVGILRKEWNQTKF. A helical transmembrane segment spans residues 1314–1334; sequence LWYMLDGVYQSVICFFFPYLA. The Extracellular segment spans residues 1335–1350; that stretch reads YHKNMVVTENGLGLDH. A helical transmembrane segment spans residues 1351–1371; it reads RYFVGVFVTAIAVTSCNFYVF. At 1372–1377 the chain is on the cytoplasmic side; the sequence is MEQYRW. A helical membrane pass occupies residues 1378–1398; the sequence is DWFCGLFICLSLAVFYGWTGI. Residues 1399-1418 lie on the Extracellular side of the membrane; sequence WTSSSSSNEFYKGAARVFAQ. Residues 1419-1439 form a helical membrane-spanning segment; that stretch reads PAYWAVLFVGVLFCLLPRFTI. Arginine 1436 contributes to the a 1,2-diacyl-sn-glycero-3-phospho-L-serine binding site. The Cytoplasmic portion of the chain corresponds to 1440–1612; it reads DCIRKIFYPK…TLLSQRSRDR (173 aa). Phosphoserine is present on serine 1542. The segment at 1544–1563 is disordered; sequence VTTTNNLPRRSMASARGNKL. Serine 1592 carries the phosphoserine modification.

It belongs to the cation transport ATPase (P-type) (TC 3.A.3) family. Type IV subfamily. Component of a flippase complex consisting of DNF1 and LEM3. Interacts with LEM3; the interaction is direct. Mg(2+) is required as a cofactor. In terms of processing, phosphorylated by FPK1 and KIN82.

The protein resides in the cell membrane. It catalyses the reaction ATP + H2O + phospholipidSide 1 = ADP + phosphate + phospholipidSide 2.. The enzyme catalyses a 1,2-diacyl-sn-glycero-3-phosphoethanolamine(out) + ATP + H2O = a 1,2-diacyl-sn-glycero-3-phosphoethanolamine(in) + ADP + phosphate + H(+). It carries out the reaction a 1,2-diacyl-sn-glycero-3-phosphocholine(out) + ATP + H2O = a 1,2-diacyl-sn-glycero-3-phosphocholine(in) + ADP + phosphate + H(+). The catalysed reaction is a beta-D-glucosyl-(1&lt;-&gt;1')-N-acylsphing-4-enine(out) + ATP + H2O = a beta-D-glucosyl-(1&lt;-&gt;1')-N-acylsphing-4-enine(in) + ADP + phosphate + H(+). It catalyses the reaction a 1,2-diacyl-sn-glycero-3-phospho-L-serine(out) + ATP + H2O = a 1,2-diacyl-sn-glycero-3-phospho-L-serine(in) + ADP + phosphate + H(+). Phosphatidylcholine flippase activity is inhibited by glucosylsphingosine, lactosylsphingosine, lysophosphatidylcholine and to a lesser degree sphingosine-1-phosphate and lysosphingomyelin. Glucosylceramide flippase activity is inhibited by lysophosphatidylcholine, glucosylsphingosine and to a lesser degree lactosylsphingosine whereas lysosphingomyelin has a stimulatory effect at low concentrations. Functionally, catalytic component of a P4-ATPase flippase complex which catalyzes the hydrolysis of ATP coupled to the transport of glucosylceramide, phosphatidylcholine, phosphatidylethanolamine, and small amounts of phosphatidylserine from the lumenal to the cytosolic leaflet of the cell membrane and ensures the maintenance of asymmetric distribution of phospholipids. Does not appear to transport sphingomyelin, inositol phosphoceramide or phosphatidic acid. Required for efficient endocytosis. Required for protein transport from Golgi to vacuoles. The chain is Phospholipid-transporting ATPase DNF2 (DNF2) from Saccharomyces cerevisiae (strain ATCC 204508 / S288c) (Baker's yeast).